A 228-amino-acid polypeptide reads, in one-letter code: FCS-Like Zinc finger 12 (228 aa).

The FLZ-type zinc finger occupies 162–205; sequence DFLTSCCLCKKKLQGKDIYMYKGDEGFCSKECRSLKIMEDSLKE.

Belongs to the FLZ family. In terms of assembly, interacts with KIN10 and KIN11 via its FLZ-type zinc finger domain. Interacts with KINB1 and KINB2 via its N-terminal part. Forms homodimer and heterodimer with FLZ2 and FLZ10 in vitro.

Its function is as follows. May act as an adapter to facilitate the interaction of SnRK1 complex with effector proteins, conferring tissue- and stimulus-type specific differences in the SnRK1 regulation pathway. The polypeptide is FCS-Like Zinc finger 12 (Arabidopsis thaliana (Mouse-ear cress)).